Consider the following 902-residue polypeptide: Leucine-rich repeat-containing G-protein coupled receptor 5A (902 aa).

Positions 1–22 (MDTSRTSLFLCSVLYSLQLVGS) are cleaved as a signal peptide. Over 23 to 557 (ARPGKQHRSC…DHLFGSWLTR (535 aa)) the chain is Extracellular. 2 disulfides stabilise this stretch: cysteine 32/cysteine 38 and cysteine 36/cysteine 49. An LRRNT domain is found at 32–61 (CPTPCECEQDGMLVRVDCSDRGLTGLPRNI). LRR repeat units follow at residues 41 to 61 (DGML…PRNI), 62 to 85 (SIFT…ALHN), 86 to 109 (LHFL…AFAG), 111 to 133 (GSLK…ALQN), 134 to 157 (LRSL…SFNG), 159 to 181 (FSLR…ALES), 182 to 205 (LSAL…AFGN), 207 to 229 (SSLV…CFDG), 230 to 253 (LHSL…IKTL), 254 to 276 (KNLK…AFIG), 278 to 300 (PSLI…AFQH), 301 to 324 (LPEL…LTGT), 325 to 347 (TSLE…VCNQ), 348 to 372 (LPNL…GCQR), 374 to 393 (QKID…TFQQ), 394 to 417 (LVGL…SFSS), and 418 to 441 (LPSL…GLHG). N-linked (GlcNAc...) asparagine glycans are attached at residues asparagine 60 and asparagine 74. A glycan (N-linked (GlcNAc...) asparagine) is linked at asparagine 205. Cysteine 345 and cysteine 370 are oxidised to a cystine. A disulfide bridge links cysteine 476 with cysteine 537. An N-linked (GlcNAc...) asparagine glycan is attached at asparagine 496. A helical transmembrane segment spans residues 558–578 (IGVWLIVLLSFVCNALVIATV). Topologically, residues 579-589 (FRPLSYVPSIK) are cytoplasmic. Residues 590–610 (LLIGLIAIINTLMGLSSGVLA) traverse the membrane as a helical segment. Residues 598 to 619 (INTLMGLSSGVLATVDALTFGN) form an LRR 18 repeat. The Extracellular portion of the chain corresponds to 611–634 (TVDALTFGNFAQYGAWWESGVGCQ). Cysteine 633 and cysteine 708 are disulfide-bonded. The chain crosses the membrane as a helical span at residues 635 to 655 (ITGFLSVFAAETSVFLLTVAA). The Cytoplasmic segment spans residues 656-678 (LERGFSIKCTTKFETKSSFLSVK). The chain crosses the membrane as a helical span at residues 679 to 699 (LSIVFCFLLSIIIAVSPLMSG). Topologically, residues 700–718 (STYGTSPFCFPLLFGDPSS) are extracellular. Residues 719–739 (MVFMVALVLLNSLCFLVMTVA) form a helical membrane-spanning segment. Residues 740–763 (YTKLYCSLEKGELENVWDCSMVKH) are Cytoplasmic-facing. A helical membrane pass occupies residues 764–784 (IALLLFTNCILYCPVAFLSFS). Residues 785-798 (SLLNLTFISPEVNK) lie on the Extracellular side of the membrane. 2 N-linked (GlcNAc...) asparagine glycosylation sites follow: asparagine 788 and asparagine 797. A helical membrane pass occupies residues 799 to 819 (SILLLIIPLPACLNPLLYILF). Topologically, residues 820-902 (NPHFKEDIGS…LSAVAFVPCH (83 aa)) are cytoplasmic.

This sequence belongs to the G-protein coupled receptor 1 family. Expressed in the developing epithelial stem cells of the intestine.

It localises to the cell membrane. The protein localises to the golgi apparatus. It is found in the trans-Golgi network membrane. Its function is as follows. Receptor for R-spondins that potentiates the canonical Wnt signaling pathway and acts as a stem cell marker of the intestinal epithelium and the hair follicle. Upon binding to R-spondins (RSPO1, RSPO2, RSPO3 or RSPO4), associates with phosphorylated LRP6 and frizzled receptors that are activated by extracellular Wnt receptors, triggering the canonical Wnt signaling pathway to increase expression of target genes. In contrast to classical G-protein coupled receptors, does not activate heterotrimeric G-proteins to transduce the signal. Involved in the development and/or maintenance of the adult intestinal stem cells during postembryonic development. This chain is Leucine-rich repeat-containing G-protein coupled receptor 5A (lgr5-a), found in Xenopus laevis (African clawed frog).